A 308-amino-acid chain; its full sequence is Protease HtpX homolog (308 aa).

2 consecutive transmembrane segments (helical) span residues Leu16–Val36 and Tyr39–Met59. His149 contributes to the Zn(2+) binding site. Glu150 is an active-site residue. His153 is a Zn(2+) binding site. A run of 2 helical transmembrane segments spans residues Val161 to Phe181 and Ile192 to Val212. Residue Glu217 coordinates Zn(2+).

This sequence belongs to the peptidase M48B family. Zn(2+) is required as a cofactor.

It localises to the cell membrane. This chain is Protease HtpX homolog, found in Thermoplasma volcanium (strain ATCC 51530 / DSM 4299 / JCM 9571 / NBRC 15438 / GSS1).